A 278-amino-acid polypeptide reads, in one-letter code: Indole-3-glycerol phosphate synthase (278 aa).

It belongs to the TrpC family.

The catalysed reaction is 1-(2-carboxyphenylamino)-1-deoxy-D-ribulose 5-phosphate + H(+) = (1S,2R)-1-C-(indol-3-yl)glycerol 3-phosphate + CO2 + H2O. The protein operates within amino-acid biosynthesis; L-tryptophan biosynthesis; L-tryptophan from chorismate: step 4/5. This Pseudomonas fluorescens (strain Pf0-1) protein is Indole-3-glycerol phosphate synthase.